The primary structure comprises 270 residues: Phosphate import ATP-binding protein PstB 1 (270 aa).

Residues 24–265 (LAVERLNLFY…PYQRQTEDYI (242 aa)) enclose the ABC transporter domain. 56 to 63 (GPSGCGKS) provides a ligand contact to ATP.

The protein belongs to the ABC transporter superfamily. Phosphate importer (TC 3.A.1.7) family. In terms of assembly, the complex is composed of two ATP-binding proteins (PstB), two transmembrane proteins (PstC and PstA) and a solute-binding protein (PstS).

It localises to the cell inner membrane. It catalyses the reaction phosphate(out) + ATP + H2O = ADP + 2 phosphate(in) + H(+). Functionally, part of the ABC transporter complex PstSACB involved in phosphate import. Responsible for energy coupling to the transport system. This is Phosphate import ATP-binding protein PstB 1 from Yersinia pestis bv. Antiqua (strain Antiqua).